Here is a 390-residue protein sequence, read N- to C-terminus: Probable purine permease 18 (390 aa).

Over residues 1 to 14 (MEMTEASKQTTAEG) the composition is skewed to polar residues. Positions 1 to 23 (MEMTEASKQTTAEGSANPEPDQI) are disordered. Position 25 is a phosphoserine (S25). 10 consecutive transmembrane segments (helical) span residues 39–59 (ISVS…MLLL), 81–101 (WLQA…FFIF), 120–140 (LILL…LFAL), 148–168 (GVFT…AAII), 176–196 (WIIL…PEFG), 211–231 (WLTF…QLCF), 250–270 (VIEM…VGLF), 297–317 (IGLA…VLYV), 324–344 (VVHM…FDFM), and 348–368 (FSWP…SYFY).

It belongs to the purine permeases (TC 2.A.7.14) family.

The protein resides in the membrane. This Arabidopsis thaliana (Mouse-ear cress) protein is Probable purine permease 18 (PUP18).